The following is a 130-amino-acid chain: Anti-adapter protein IraD (130 aa).

Belongs to the GpW/Gp25 family. IraD subfamily. As to quaternary structure, interacts with RssB.

Its subcellular location is the cytoplasm. In terms of biological role, inhibits RpoS proteolysis by regulating RssB activity, thereby increasing the stability of the sigma stress factor RpoS during oxidative stress. Its effect on RpoS stability is due to its interaction with RssB, which probably blocks the interaction of RssB with RpoS, and the consequent delivery of the RssB-RpoS complex to the ClpXP protein degradation pathway. This is Anti-adapter protein IraD from Escherichia coli O7:K1 (strain IAI39 / ExPEC).